A 252-amino-acid polypeptide reads, in one-letter code: Proteasome subunit alpha 1 (252 aa).

Met-1 carries the post-translational modification N-acetylmethionine; alternate.

The protein belongs to the peptidase T1A family. As to quaternary structure, the 20S proteasome core is composed of 14 alpha and 14 beta subunits that assemble into four stacked heptameric rings, resulting in a barrel-shaped structure. The two inner rings, each composed of seven catalytic beta subunits, are sandwiched by two outer rings, each composed of seven alpha subunits. H.volcanii produces at least 2 types of 20S proteasomes: an alpha1-beta proteasome and a proteasome containing all three subunits (alpha1, alpha2, and beta) that appears to be asymmetrical with homo-oligomeric alpha1 and alpha2 rings positioned on separate ends. The catalytic chamber with the active sites is on the inside of the barrel. Has probably a gated structure, the ends of the cylinder being occluded by the N-termini of the alpha-subunits. Is likely capped at one or both ends by the proteasome regulatory ATPase, PAN. Acetylated. The acetylated form at Met-1 was shown to be in 100-fold excess of the unacetylated form with the initiator methionine removed in whole cells and purified 20S proteasomes.

Its subcellular location is the cytoplasm. The formation of the proteasomal ATPase PAN-20S proteasome complex, via the docking of the C-termini of PAN into the intersubunit pockets in the alpha-rings, triggers opening of the gate for substrate entry. Interconversion between the open-gate and close-gate conformations leads to a dynamic regulation of the 20S proteasome proteolysis activity. In vitro, the chymotrypsin-like activity of the alpha1-beta proteasome is potently inhibited by carbobenzoxyl-leucinyl-leucinyl-leucinal-H (MG132) and significantly by N-acetyl-leucinyl-leucinyl-norleucinal-H (calpain inhibitor I). Component of the proteasome core, a large protease complex with broad specificity involved in protein degradation. The H.volcanii alpha1-beta proteasome is able to cleave oligopeptides after Phe, Tyr and Trp, poorly after Glu but not after Arg. Thus, displays chymotrypsin-like activity, low caspase-like activity but no trypsin-like activity. The chain is Proteasome subunit alpha 1 from Haloferax volcanii (strain ATCC 29605 / DSM 3757 / JCM 8879 / NBRC 14742 / NCIMB 2012 / VKM B-1768 / DS2) (Halobacterium volcanii).